Consider the following 610-residue polypeptide: ABC transporter ATP-binding protein ARB1 (610 aa).

The tract at residues 1–43 is disordered; that stretch reads MPPVSASKAKRDAKKAEREAKKAAAGKTIRKLGRKKEAAAEES. Phosphoserine is present on residues Ser43 and Ser65. ABC transporter domains follow at residues 82–323 and 393–610; these read IKLS…TNQM and LAFD…NVVL. 114-121 contributes to the ATP binding site; it reads GENGCGKS. Phosphoserine is present on Ser196. 428-435 lines the ATP pocket; the sequence is GPNGVGKS. Residue Thr446 is modified to Phosphothreonine.

The protein belongs to the ABC transporter superfamily. ABCF family. EF3 subfamily. As to quaternary structure, interacts with LSG1.

Its subcellular location is the cytoplasm. The protein resides in the nucleus. The enzyme catalyses ATP + H2O = ADP + phosphate + H(+). In terms of biological role, ATPase that stimulates 40S and 60S ribosome biogenesis. Also involved in ribosome-associated quality control (RQC) pathway, a pathway that mediates ubiquitination and extraction of incompletely synthesized nascent chains for proteasomal degradation: localizes to the ribosomal E-site and stimulates VMS1-dependent tRNA cleavage. The protein is ABC transporter ATP-binding protein ARB1 (ARB1) of Saccharomyces cerevisiae (strain ATCC 204508 / S288c) (Baker's yeast).